Reading from the N-terminus, the 465-residue chain is Ribulose bisphosphate carboxylase large chain (465 aa).

K4 is modified (N6,N6,N6-trimethyllysine). 2 residues coordinate substrate: N113 and T163. Residue K165 is the Proton acceptor of the active site. Position 167 (K167) interacts with substrate. Residues K191, D193, and E194 each contribute to the Mg(2+) site. K191 is subject to N6-carboxylysine. Catalysis depends on H284, which acts as the Proton acceptor. Residues R285, H317, and S369 each coordinate substrate.

The protein belongs to the RuBisCO large chain family. Type I subfamily. In terms of assembly, heterohexadecamer of 8 large chains and 8 small chains; disulfide-linked. The disulfide link is formed within the large subunit homodimers. Mg(2+) serves as cofactor. In terms of processing, the disulfide bond which can form in the large chain dimeric partners within the hexadecamer appears to be associated with oxidative stress and protein turnover.

Its subcellular location is the plastid. The protein resides in the chloroplast. The enzyme catalyses 2 (2R)-3-phosphoglycerate + 2 H(+) = D-ribulose 1,5-bisphosphate + CO2 + H2O. The catalysed reaction is D-ribulose 1,5-bisphosphate + O2 = 2-phosphoglycolate + (2R)-3-phosphoglycerate + 2 H(+). RuBisCO catalyzes two reactions: the carboxylation of D-ribulose 1,5-bisphosphate, the primary event in carbon dioxide fixation, as well as the oxidative fragmentation of the pentose substrate in the photorespiration process. Both reactions occur simultaneously and in competition at the same active site. The chain is Ribulose bisphosphate carboxylase large chain from Cassia fistula (Golden shower tree).